A 490-amino-acid polypeptide reads, in one-letter code: MDLVTFLVLTLSSLILLSLWRQRSRRGRLPPGPTPFPIIGNFLQIDVKNFNQSLTNFSKTYGPVFTLYLGSRPIVVLHGYEAVKEALIDHGEEFSGRENIPMSEKINNGLGITFSNGNSWKETRRFTLMTLRNLGMGKRNIEDRVREEAQCLVEELRKTKGSPCDPTFILSCAPCNVICSIIFQDRFDYKDKDFLMLMKKLNENVKILSSPWLQVCNNFPLLIDYCPGSHHKVLKNFKYIRSYLLEKVKEHQESLDVTNPRDFIDYFLIKQKQANHIEQAEYSLENLVCTINNLFAAGTETTSTTLRYALLLLMKYPDVTAKVQEEIDHVVGRHRSPCMQDRSRMPYTDAMIHEVQRFINLVPNNLPHAVTCDIKFRNYIIPKGTTVVTSLTSVLHDSKEFPNPEMFDPGHFLDANGNFKKSDYFMTFSAGKRVCAGEGLARMELFLILTTILQNFKLKSLVHPKDIDMIPFVNGLITLPPHYQLCFIPL.

The N-terminal stretch at 1-20 (MDLVTFLVLTLSSLILLSLW) is a signal peptide. C435 contributes to the heme binding site.

It belongs to the cytochrome P450 family. It depends on heme as a cofactor. As to expression, liver, brain, kidney, and intestine, with trace amounts in lung and heart.

It localises to the endoplasmic reticulum membrane. It is found in the microsome membrane. It carries out the reaction an organic molecule + reduced [NADPH--hemoprotein reductase] + O2 = an alcohol + oxidized [NADPH--hemoprotein reductase] + H2O + H(+). The enzyme catalyses (5Z,8Z,11Z,14Z)-eicosatetraenoate + reduced [NADPH--hemoprotein reductase] + O2 = 11,12-epoxy-(5Z,8Z,14Z)-eicosatrienoate + oxidized [NADPH--hemoprotein reductase] + H2O + H(+). It participates in lipid metabolism; arachidonate metabolism. A cytochrome P450 monooxygenase that primarily catalyzes the epoxidation of 11,12 double bond of (5Z,8Z,11Z,14Z)-eicosatetraenoic acid (arachidonate) forming 11,12-epoxyeicosatrienoic acid (11,12-EET) regioisomer. Mechanistically, uses molecular oxygen inserting one oxygen atom into a substrate, and reducing the second into a water molecule, with two electrons provided by NADPH via cytochrome P450 reductase (CPR; NADPH--hemoprotein reductase). This is Cytochrome P450 2C38 from Mus musculus (Mouse).